The primary structure comprises 83 residues: Protein midgut expression 1 (83 aa).

In terms of tissue distribution, endoderm-specific pattern of expression during embryogenesis; anterior and posterior midgut primordia.

Functionally, involved in morphogenesis and development. The sequence is that of Protein midgut expression 1 (mex1) from Drosophila melanogaster (Fruit fly).